A 409-amino-acid polypeptide reads, in one-letter code: Elongation factor Tu (409 aa).

In terms of domain architecture, tr-type G spans 10 to 214; sequence KPHVNIGTIG…AVDSYIPDPE (205 aa). The tract at residues 19-26 is G1; that stretch reads GHVDHGKT. GTP is bound at residue 19 to 26; that stretch reads GHVDHGKT. Mg(2+) is bound at residue Thr-26. Residues 60 to 64 form a G2 region; it reads GITIN. The segment at 81 to 84 is G3; it reads DCPG. GTP contacts are provided by residues 81–85 and 136–139; these read DCPGH and NKED. The G4 stretch occupies residues 136–139; sequence NKED. A G5 region spans residues 174-176; the sequence is SGL.

Monomer.

The protein resides in the cytoplasm. The enzyme catalyses GTP + H2O = GDP + phosphate + H(+). Its function is as follows. GTP hydrolase that promotes the GTP-dependent binding of aminoacyl-tRNA to the A-site of ribosomes during protein biosynthesis. The chain is Elongation factor Tu from Nostoc sp. (strain PCC 7120 / SAG 25.82 / UTEX 2576).